Consider the following 958-residue polypeptide: Structure-specific endonuclease subunit SLX4 (958 aa).

Disordered regions lie at residues 89–123 (AESP…KGKT), 183–209 (QKKA…GPID), 326–400 (LATA…LSPT), 531–589 (DLTI…EQHQ), 594–613 (QSNT…SFEL), and 655–849 (STAA…SPPA). The segment covering 109 to 121 (KKPRTAGARKKKG) has biased composition (basic residues). Positions 332–341 (RRPEEAERST) are enriched in basic and acidic residues. The segment covering 342–351 (LSRQQDTHIP) has biased composition (polar residues). The segment covering 364–373 (AASKSASAKP) has biased composition (low complexity). Basic residues predominate over residues 374–389 (KAAKKAPKPRATKKKQ). The segment covering 600–610 (QPQPAPPPPPS) has biased composition (pro residues). Composition is skewed to low complexity over residues 655–666 (STAAQAAMSTSA), 775–787 (TTSP…RAKA), and 821–838 (PDSG…SSPD).

This sequence belongs to the SLX4 family. As to quaternary structure, forms a heterodimer with SLX1. Post-translationally, phosphorylated in response to DNA damage.

The protein resides in the nucleus. Functionally, regulatory subunit of the SLX1-SLX4 structure-specific endonuclease that resolves DNA secondary structures generated during DNA repair and recombination. Has endonuclease activity towards branched DNA substrates, introducing single-strand cuts in duplex DNA close to junctions with ss-DNA. The protein is Structure-specific endonuclease subunit SLX4 of Chaetomium globosum (strain ATCC 6205 / CBS 148.51 / DSM 1962 / NBRC 6347 / NRRL 1970) (Soil fungus).